We begin with the raw amino-acid sequence, 317 residues long: Integrin-binding sialoprotein (317 aa).

The first 16 residues, 1–16 (MKTALILLSILGMACA), serve as a signal peptide directing secretion. Phosphoserine occurs at positions 31, 67, 74, 75, 94, and 100. A disordered region spans residues 58–254 (FPVQGSSDSS…RTTSPPFGKT (197 aa)). Residues 66 to 102 (SSEENGDDSSEEEEEEEETSNEGENNEESNEDEDSEA) are compositionally biased toward acidic residues. N-linked (GlcNAc...) asparagine glycosylation is present at Asn-104. O-linked (GalNAc...) threonine glycosylation is found at Thr-119 and Thr-122. Residue Ser-149 is modified to Phosphoserine. Acidic residues predominate over residues 149 to 173 (SDEEEEEEEEGNENEESEAEVDENE). Residues Asn-177, Asn-182, and Asn-190 are each glycosylated (N-linked (GlcNAc...) asparagine). Positions 222–232 (KGTSKTTTSPN) are enriched in polar residues. 5 O-linked (GalNAc...) threonine glycosylation sites follow: Thr-227, Thr-228, Thr-229, Thr-238, and Thr-239. Ser-280 is modified (phosphoserine). An Integrin-binding motif motif is present at residues 286 to 288 (RGD). Residues Tyr-313 and Tyr-314 each carry the sulfotyrosine modification.

As to quaternary structure, monomer. Interacts with integrins; the interaction promotes cell adhesion. Post-translationally, N-glycosylated; glycans consist of sialylated and core-fucosylated bi-, tri- and tetraantennary chains. In terms of processing, O-glycosylated at eight sites; mucin-type glycans contain Gal, GlcNAc, GalNAc and terminal NeuAc. In terms of tissue distribution, expressed in bone (at protein level). Expressed in trophoblast cells of placenta (at protein level). Expressed in brain.

The protein resides in the secreted. Binds tightly to hydroxyapatite. Appears to form an integral part of the mineralized matrix. Probably important to cell-matrix interaction. Promotes adhesion and migration of various cells via the alpha-V/beta-3 integrin receptor (ITGAV:ITGB3). The chain is Integrin-binding sialoprotein (IBSP) from Homo sapiens (Human).